Reading from the N-terminus, the 329-residue chain is DNA repair protein RAD51 homolog 4 (329 aa).

A preferentially binds ssDNA region spans residues 1-83 (MGMLRAGLCP…ELKTSTAILS (83 aa)). Residues 4–77 (LRAGLCPGLT…GADLYEELKT (74 aa)) form an interaction with XRCC2 region. Residues 77–328 (TSTAILSTGI…EQSPELPGKQ (252 aa)) form an interaction with RAD51C region. 107–114 (GGPGSGKT) provides a ligand contact to ATP.

It belongs to the RecA family. RAD51 subfamily. In terms of assembly, part of the BCDX2 complex consisting of RAD51B, RAD51C, RAD51D and XRCC2; the complex has a ring-like structure arranged into a flat disc around a central channel. In the absence of DNA, the BCDX2 subcomplex XRCC2:RAD51D formed a multimeric ring structure; in the presence of single-stranded DNA it formed a filamentous structure with the ssDNA. Interacts with SWSAP1 and ZSWIM7; involved in homologous recombination repair. Interacts with BLM; required for stimulation of BLM activity by the BCDX2 subcomplex XRCC2:RAD51D. Highly expressed in brain followed by testis. Also expressed in heart, liver, kidney, spleen, lung and skeletal muscle.

It localises to the nucleus. The protein localises to the chromosome. Its subcellular location is the telomere. Its function is as follows. Involved in the homologous recombination repair (HRR) pathway of double-stranded DNA breaks arising during DNA replication or induced by DNA-damaging agents. Bind to single-stranded DNA (ssDNA) and has DNA-dependent ATPase activity. Part of the RAD51 paralog protein complex BCDX2 which acts in the BRCA1-BRCA2-dependent HR pathway. Upon DNA damage, BCDX2 acts downstream of BRCA2 recruitment and upstream of RAD51 recruitment. BCDX2 binds predominantly to the intersection of the four duplex arms of the Holliday junction and to junction of replication forks. The BCDX2 complex was originally reported to bind single-stranded DNA, single-stranded gaps in duplex DNA and specifically to nicks in duplex DNA. Involved in telomere maintenance. The BCDX2 subcomplex XRCC2:RAD51D can stimulate Holliday junction resolution by BLM. This is DNA repair protein RAD51 homolog 4 (Rad51d) from Mus musculus (Mouse).